Consider the following 238-residue polypeptide: Probable transcriptional regulatory protein SUB0364 (238 aa).

It belongs to the TACO1 family. YeeN subfamily.

It localises to the cytoplasm. This chain is Probable transcriptional regulatory protein SUB0364, found in Streptococcus uberis (strain ATCC BAA-854 / 0140J).